Here is a 122-residue protein sequence, read N- to C-terminus: MSLTNEQLIEAIASKSVSEIVELIAAMEEKFGVSAAVAAAAPAAGGAAAAEEKTEFNVVLTEAGANKVAVIKAVRGATGLGLKEAKDLVESAPANLKEGISKGEAEELKKALEEAGAKVEIK.

This sequence belongs to the bacterial ribosomal protein bL12 family. In terms of assembly, homodimer. Part of the ribosomal stalk of the 50S ribosomal subunit. Forms a multimeric L10(L12)X complex, where L10 forms an elongated spine to which 2 to 4 L12 dimers bind in a sequential fashion. Binds GTP-bound translation factors.

Functionally, forms part of the ribosomal stalk which helps the ribosome interact with GTP-bound translation factors. Is thus essential for accurate translation. The sequence is that of Large ribosomal subunit protein bL12 from Actinobacillus succinogenes (strain ATCC 55618 / DSM 22257 / CCUG 43843 / 130Z).